The primary structure comprises 156 residues: Small ribosomal subunit protein uS7 (156 aa).

This sequence belongs to the universal ribosomal protein uS7 family. As to quaternary structure, part of the 30S ribosomal subunit. Contacts proteins S9 and S11.

In terms of biological role, one of the primary rRNA binding proteins, it binds directly to 16S rRNA where it nucleates assembly of the head domain of the 30S subunit. Is located at the subunit interface close to the decoding center, probably blocks exit of the E-site tRNA. The chain is Small ribosomal subunit protein uS7 from Salmonella agona (strain SL483).